A 112-amino-acid polypeptide reads, in one-letter code: uncharacterized protein (112 aa).

An N-terminal signal peptide occupies residues 1–21; that stretch reads MKTLFTSVVLCGALVVSSSFA. HhH domains lie at 49 to 79 and 80 to 109; these read DKLNINTATASEIQKSLTGIGAKKAEAIVQY and REKHGNFXNAEQLLEVQGIGKATLEKNRDR.

This is an uncharacterized protein from Haemophilus influenzae (strain ATCC 51907 / DSM 11121 / KW20 / Rd).